We begin with the raw amino-acid sequence, 111 residues long: 2Fe-2S ferredoxin (111 aa).

The 2Fe-2S ferredoxin-type domain maps to 2 to 104 (PKIVILPHQD…DLVVEIPRYT (103 aa)). Positions 42, 48, 51, and 87 each coordinate [2Fe-2S] cluster.

The protein belongs to the adrenodoxin/putidaredoxin family. The cofactor is [2Fe-2S] cluster.

Ferredoxin are iron-sulfur proteins that transfer electrons in a wide variety of metabolic reactions. Although the function of this ferredoxin is unknown it is probable that it has a role as a cellular electron transfer protein. Involved in the in vivo assembly of the Fe-S clusters in a wide variety of iron-sulfur proteins. The chain is 2Fe-2S ferredoxin (fdx) from Escherichia coli O157:H7.